The sequence spans 234 residues: uncharacterized protein (234 aa).

Positions 103–211 (LAKKVPFVVC…SHIKIGKSFL (109 aa)) constitute a tRNA-binding domain.

This is an uncharacterized protein from Mycoplasma pneumoniae (strain ATCC 29342 / M129 / Subtype 1) (Mycoplasmoides pneumoniae).